The chain runs to 84 residues: Putative ribosomal RNA large subunit methyltransferase H 2 (84 aa).

S-adenosyl-L-methionine contacts are provided by residues G33 and 52–57 (FSKMTF).

It belongs to the RNA methyltransferase RlmH family. As to quaternary structure, homodimer.

The protein localises to the cytoplasm. It catalyses the reaction pseudouridine(1915) in 23S rRNA + S-adenosyl-L-methionine = N(3)-methylpseudouridine(1915) in 23S rRNA + S-adenosyl-L-homocysteine + H(+). Specifically methylates the pseudouridine at position 1915 (m3Psi1915) in 23S rRNA. This is Putative ribosomal RNA large subunit methyltransferase H 2 (rlmH2) from Clostridium perfringens (strain SM101 / Type A).